Here is a 349-residue protein sequence, read N- to C-terminus: Biotin synthase (349 aa).

The Radical SAM core domain occupies 60–287; sequence GDVELATLLS…KARVRLSAGR (228 aa). [4Fe-4S] cluster is bound by residues Cys-75, Cys-79, and Cys-82. Residues Cys-119, Cys-150, Cys-210, and Arg-282 each coordinate [2Fe-2S] cluster.

It belongs to the radical SAM superfamily. Biotin synthase family. In terms of assembly, homodimer. The cofactor is [4Fe-4S] cluster. [2Fe-2S] cluster serves as cofactor.

The enzyme catalyses (4R,5S)-dethiobiotin + (sulfur carrier)-SH + 2 reduced [2Fe-2S]-[ferredoxin] + 2 S-adenosyl-L-methionine = (sulfur carrier)-H + biotin + 2 5'-deoxyadenosine + 2 L-methionine + 2 oxidized [2Fe-2S]-[ferredoxin]. It participates in cofactor biosynthesis; biotin biosynthesis; biotin from 7,8-diaminononanoate: step 2/2. Its function is as follows. Catalyzes the conversion of dethiobiotin (DTB) to biotin by the insertion of a sulfur atom into dethiobiotin via a radical-based mechanism. This chain is Biotin synthase, found in Albidiferax ferrireducens (strain ATCC BAA-621 / DSM 15236 / T118) (Rhodoferax ferrireducens).